The chain runs to 354 residues: Guanine nucleotide-binding protein alpha-12 subunit (354 aa).

The 324-residue stretch at 31–354 folds into the G-alpha domain; the sequence is QPLKLLLLGS…SLLMNVAEIL (324 aa). The segment at 34-47 is G1 motif; the sequence is KLLLLGSGECGKST. Residues 39–46, 178–184, 203–207, 272–275, and Ala329 contribute to the GTP site; these read GSGECGKS, LRVRVKT, DVGGQ, and NKID. The Mg(2+) site is built by Ser46 and Thr184. Residues 176-184 are G2 motif; that stretch reads DFLRVRVKT. Residues 199–208 are G3 motif; the sequence is FKLVDVGGQK. Positions 268 to 275 are G4 motif; the sequence is VLFFNKID. The segment at 327–332 is G5 motif; it reads TCALDS.

This sequence belongs to the G-alpha family. As to quaternary structure, g proteins are composed of 3 units; alpha, beta and gamma. The alpha chain contains the guanine nucleotide binding site.

Functionally, guanine nucleotide-binding proteins (G proteins) are involved as modulators or transducers in various transmembrane signaling systems. The protein is Guanine nucleotide-binding protein alpha-12 subunit (gpaL) of Dictyostelium discoideum (Social amoeba).